We begin with the raw amino-acid sequence, 79 residues long: Large ribosomal subunit protein uL22 (79 aa).

It belongs to the universal ribosomal protein uL22 family. In terms of assembly, part of the 50S ribosomal subunit.

In terms of biological role, this protein binds specifically to 23S rRNA; its binding is stimulated by other ribosomal proteins, e.g. L4, L17, and L20. It is important during the early stages of 50S assembly. It makes multiple contacts with different domains of the 23S rRNA in the assembled 50S subunit and ribosome. Functionally, the globular domain of the protein is located near the polypeptide exit tunnel on the outside of the subunit, while an extended beta-hairpin is found that lines the wall of the exit tunnel in the center of the 70S ribosome. This Prunus armeniaca phytoplasma protein is Large ribosomal subunit protein uL22 (rplV).